An 821-amino-acid polypeptide reads, in one-letter code: Leucine--tRNA ligase (821 aa).

The 'HIGH' region motif lies at 44 to 54; the sequence is PYPSGRIHMGH. The 'KMSKS' region motif lies at 589-593; the sequence is KMSKS. Lys592 lines the ATP pocket.

The protein belongs to the class-I aminoacyl-tRNA synthetase family.

It localises to the cytoplasm. The catalysed reaction is tRNA(Leu) + L-leucine + ATP = L-leucyl-tRNA(Leu) + AMP + diphosphate. The protein is Leucine--tRNA ligase of Campylobacter concisus (strain 13826).